The primary structure comprises 335 residues: Glyceraldehyde-3-phosphate dehydrogenase (335 aa).

Residues 13–14, Asp-34, Met-79, and Ser-121 contribute to the NAD(+) site; that span reads RI. D-glyceraldehyde 3-phosphate-binding positions include 151–153, Thr-182, 211–212, and Arg-234; these read SCT and TG. Cys-152 (nucleophile) is an active-site residue. S-nitrosocysteine is present on Cys-152. Asn-316 provides a ligand contact to NAD(+).

It belongs to the glyceraldehyde-3-phosphate dehydrogenase family. Homotetramer. S-nitrosylation of Cys-152 leads to translocation to the nucleus.

The protein localises to the cytoplasm. The protein resides in the cytosol. It localises to the cytoskeleton. It is found in the nucleus. It catalyses the reaction D-glyceraldehyde 3-phosphate + phosphate + NAD(+) = (2R)-3-phospho-glyceroyl phosphate + NADH + H(+). It carries out the reaction S-nitroso-L-cysteinyl-[GAPDH] + L-cysteinyl-[protein] = L-cysteinyl-[GAPDH] + S-nitroso-L-cysteinyl-[protein]. The protein operates within carbohydrate degradation; glycolysis; pyruvate from D-glyceraldehyde 3-phosphate: step 1/5. Functionally, has both glyceraldehyde-3-phosphate dehydrogenase and nitrosylase activities, thereby playing a role in glycolysis and nuclear functions, respectively. Glyceraldehyde-3-phosphate dehydrogenase is a key enzyme in glycolysis that catalyzes the first step of the pathway by converting D-glyceraldehyde 3-phosphate (G3P) into 3-phospho-D-glyceroyl phosphate. Participates in nuclear events including transcription, RNA transport, DNA replication and apoptosis. Nuclear functions are probably due to the nitrosylase activity that mediates cysteine S-nitrosylation of nuclear target proteins such as SIRT1, HDAC2 and PRKDC. This is Glyceraldehyde-3-phosphate dehydrogenase (gapdh) from Oncorhynchus mykiss (Rainbow trout).